Consider the following 445-residue polypeptide: Ktr system potassium uptake protein B (445 aa).

A run of 12 helical transmembrane segments spans residues 19–39 (VLAIGFFLTIIIGAVLLMLPI), 46–66 (SWIDALFTAASATTVTGLAVV), 79–99 (VIMGLIQIGGLGFMTFAVLIV), 127–147 (IGLVKVLFLFSISIELIAALI), 161–181 (GLFASLFHAISAFNNAGFSLW), 196–216 (LVITFLFITGGIGFTVLFDVM), 230–250 (LMLTGTLMLNAIAMLTVFILE), 286–306 (FGSMREGTIVFTLLLMFIGAG), 313–333 (GIKLTTFIVILTSVIAYLRGK), 351–371 (ALAVSVTSLFIVFLGIFALTI), 377–397 (FLQIVFETFSAFGTVGLTMGL), and 408–428 (IIIVIMFIGRIGPLTFVFSFA).

It belongs to the TrkH potassium transport family. Ktr (TC 2.A.38.4) subfamily. In terms of assembly, homodimer. Part of the KtrAB complex formed by an octameric catalytic ring of KtrA and a membrane associated dimer of KtrB forming a potassium channel.

The protein resides in the cell membrane. Functionally, integral membrane subunit of the KtrAB potassium uptake transporter. The 2 major potassium transporter complexes KtrAB and KtrCD confer resistance to both suddenly imposed and prolonged osmotic stress. This is Ktr system potassium uptake protein B (ktrB) from Bacillus subtilis (strain 168).